The chain runs to 386 residues: Ethanolamine kinase 2 (386 aa).

Belongs to the choline/ethanolamine kinase family. In terms of tissue distribution, expressed in kidney, liver, ovary, testis and prostate.

The enzyme catalyses ethanolamine + ATP = phosphoethanolamine + ADP + H(+). Its pathway is phospholipid metabolism; phosphatidylethanolamine biosynthesis; phosphatidylethanolamine from ethanolamine: step 1/3. Highly specific for ethanolamine phosphorylation. Does not have choline kinase activity. The chain is Ethanolamine kinase 2 (ETNK2) from Homo sapiens (Human).